The chain runs to 172 residues: uncharacterized protein (172 aa).

The protein belongs to the baculoviridae 19 kDa protein family.

This is an uncharacterized protein from Orgyia pseudotsugata multicapsid polyhedrosis virus (OpMNPV).